The following is a 330-amino-acid chain: uncharacterized protein (330 aa).

The region spanning 4–242 is the ABC transporter domain; that stretch reads LSIQNLVVEY…AGEVLFEQST (239 aa). Residue 40–47 coordinates ATP; that stretch reads GPSGCGKT. Residue 210 to 330 participates in a nucleoside 3',5'-cyclic phosphate binding; sequence DRVVELTPDF…LIEHRALAND (121 aa).

The protein belongs to the ABC transporter superfamily. As to quaternary structure, the complex is composed of two ATP-binding proteins (MT0079), two transmembrane proteins (MT0078) and a solute-binding protein.

Probably part of an ABC transporter complex. Probably responsible for energy coupling to the transport system. This is an uncharacterized protein from Mycobacterium tuberculosis (strain CDC 1551 / Oshkosh).